Here is a 370-residue protein sequence, read N- to C-terminus: DNA replication and repair protein RecF (370 aa).

30 to 37 (GENAQGKT) is a binding site for ATP.

The protein belongs to the RecF family.

It localises to the cytoplasm. Its function is as follows. The RecF protein is involved in DNA metabolism; it is required for DNA replication and normal SOS inducibility. RecF binds preferentially to single-stranded, linear DNA. It also seems to bind ATP. In Staphylococcus aureus (strain USA300), this protein is DNA replication and repair protein RecF.